A 142-amino-acid chain; its full sequence is Neurofilament heavy polypeptide (142 aa).

In terms of domain architecture, IF rod spans 1–142 (MRGAVLRLGA…EAAKVNTDAM (142 aa)). Residues 26 to 74 (IAHVRQRLDDEARQRQEAEAAARALARFAQEAEAARVELQKKAQALQEE) are a coiled coil.

It belongs to the intermediate filament family. Forms heterodimers with NEFL; which can further hetero-oligomerize (in vitro). Forms heterodimers with INA (in vitro). There are a number of repeats of the tripeptide K-S-P, NFH is phosphorylated on a number of the serines in this motif. It is thought that phosphorylation of NFH results in the formation of interfilament cross bridges that are important in the maintenance of axonal caliber. In terms of processing, phosphorylation seems to play a major role in the functioning of the larger neurofilament polypeptides (NF-M and NF-H), the levels of phosphorylation being altered developmentally and coincidentally with a change in the neurofilament function. Post-translationally, phosphorylated in the head and rod regions by the PKC kinase PKN1, leading to the inhibition of polymerization.

The protein resides in the cytoplasm. It localises to the cytoskeleton. Its subcellular location is the cell projection. The protein localises to the axon. Functionally, neurofilaments usually contain three intermediate filament proteins: NEFL, NEFM, and NEFH which are involved in the maintenance of neuronal caliber. NEFH has an important function in mature axons that is not subserved by the two smaller NF proteins. May additionally cooperate with the neuronal intermediate filament proteins PRPH and INA to form neuronal filamentous networks. This is Neurofilament heavy polypeptide (NEFH) from Sus scrofa (Pig).